The chain runs to 330 residues: Syntaxin-121 (330 aa).

The span at M1–K10 shows a compositional bias: polar residues. A disordered region spans residues M1–G39. The Cytoplasmic portion of the chain corresponds to M1–W284. Residues T12–V28 show a composition bias toward gly residues. One can recognise a t-SNARE coiled-coil homology domain in the interval V212–A274. A helical; Anchor for type IV membrane protein transmembrane segment spans residues T285–L305. Topologically, residues K306–A330 are vesicular. Residues N311–A330 form a disordered region. Positions P320 to A330 are enriched in pro residues.

The protein belongs to the syntaxin family. In terms of assembly, interacts with SNAP32. Expressed in roots, stems, leaf blades and leaf sheaths.

It is found in the cell membrane. Functionally, vesicle trafficking protein that functions in the secretory pathway. Involved in plant defense by mediating host resistance to the rice blast fungus Magnaporthe oryzae. The interaction with SNAP32 may contribute to host resistance to the rice blast fungus. The protein is Syntaxin-121 of Oryza sativa subsp. japonica (Rice).